Here is a 1615-residue protein sequence, read N- to C-terminus: Regulating synaptic membrane exocytosis protein 1 (1615 aa).

Residues 1–26 (MSSAVGPRGPRPPTVPPPMQELPDLS) form a disordered region. The span at 9 to 20 (GPRPPTVPPPMQ) shows a compositional bias: pro residues. Residues 22–205 (LPDLSHLTEE…TKSGAWFFGS (184 aa)) form the RabBD domain. The FYVE-type zinc-finger motif lies at 133–193 (KDDAPTCGIC…VCNLCRKQQE (61 aa)). 8 residues coordinate Zn(2+): Cys139, Cys142, Cys155, Cys158, Cys163, Cys166, Cys185, and Cys188. A disordered region spans residues 205 to 569 (SGPQQPSQDG…CEDVELESES (365 aa)). Residues 206–222 (GPQQPSQDGTLSDTATG) show a composition bias toward polar residues. Residues 227–240 (VPREKKARLQERSR) show a composition bias toward basic and acidic residues. Over residues 241–256 (SQTPLSTAAVSSQDTA) the composition is skewed to polar residues. Residues 327–379 (ADERERKERRETRRLEKGRSQDYSDRPEKRDNGRVAEDQKQRKEEEYQTRYRS) show a composition bias toward basic and acidic residues. A compositionally biased stretch (basic residues) spans 399-410 (MHARVSRARHER). Low complexity predominate over residues 421 to 459 (EAAAAAPAEATAGKRAPATARVSPPESPRARAAAAQPPT). Residues 460 to 475 (EHGPPPPRPAPGPAEP) show a composition bias toward pro residues. The span at 476–489 (PEPRVPEPLRKQGR) shows a compositional bias: basic and acidic residues. A compositionally biased stretch (polar residues) spans 511–523 (RNDSLSSDQSESV). Position 514 is a phosphoserine (Ser514). The segment covering 529-541 (KPHRPKRGGKRRQ) has biased composition (basic residues). The span at 559-569 (SCEDVELESES) shows a compositional bias: acidic residues. Ser592 bears the Phosphoserine mark. In terms of domain architecture, PDZ spans 619-705 (RTTMPKESGA…EPQVEIIVSR (87 aa)). A disordered region spans residues 712–746 (RIPESSHPPLESSSSSFESQKMERPSISVISPTSP). The segment covering 714–730 (PESSHPPLESSSSSFES) has biased composition (low complexity). Residues Ser742 and Ser745 each carry the phosphoserine modification. In terms of domain architecture, C2 1 spans 756-879 (LPGQLSVKLW…ALLDDEPHWY (124 aa)). Residues 884-1201 (HDESSLPLPQ…RQLPQVPVRS (318 aa)) are disordered. A Phosphoserine modification is found at Ser895. The span at 949–958 (ATTLTVPEQQ) shows a compositional bias: polar residues. Ser991 carries the post-translational modification Phosphoserine. Over residues 1006–1023 (RHHDASRSPADHRSRHVE) the composition is skewed to basic and acidic residues. Ser1045 carries the post-translational modification Phosphoserine. Positions 1078-1092 (SPERERHSRKSERCS) are enriched in basic and acidic residues. A compositionally biased stretch (polar residues) spans 1173–1187 (QGSPTQSPPADTSFG). At Ser1175 the chain carries Phosphoserine. Thr1177 carries the post-translational modification Phosphothreonine. Residues Ser1179, Ser1231, Ser1233, Ser1234, Ser1262, Ser1263, and Ser1265 each carry the phosphoserine modification. A disordered region spans residues 1256–1313 (DNASAKSSDSDVSDVSAISRASSTSRLSSTSFMSEQSERPRGRISSFTPKMQGRRMGT). Residues 1268–1289 (SDVSAISRASSTSRLSSTSFMS) are compositionally biased toward low complexity. A Phosphoserine modification is found at Ser1339. A disordered region spans residues 1368–1397 (RSRSTSQLSQTESGHKKLKSTIQRSTETGM). One can recognise a C2 2 domain in the interval 1461 to 1579 (AMGDIQIGME…DLSSMVIGWY (119 aa)). Residues Ser1600, Ser1603, Ser1606, and Ser1615 each carry the phosphoserine modification.

Interacts with RAB3C, RAB10, RAB26 and RAB37. Binds SNAP25, SYT1 and CACNA1B. Interaction with SYT1 is enhanced by calcium ions. Interaction with SNAP25 is weaker in the presence of calcium ions. Binds RAB3A, RAB3B and RAB3D that have been activated by GTP-binding. Binds UNC13A. Interacts with TSPOAP1 and RIMBP2. Interacts with PPFIA3 and PPFIA4. Interacts with ERC1. In terms of processing, phosphorylated by BRSK1. Highly expressed in hippocampus, brain cortex, cerebellum and olfactory bulb. Detected at lower levels in midbrain, hindbrain and spinal cord. Detected retina and in spinal cord motor neurons.

The protein resides in the cell membrane. The protein localises to the synapse. It localises to the presynaptic cell membrane. In terms of biological role, rab effector involved in exocytosis. May act as scaffold protein that regulates neurotransmitter release at the active zone. Essential for maintaining normal probability of neurotransmitter release and for regulating release during short-term synaptic plasticity. Plays a role in dendrite formation by melanocytes. This Rattus norvegicus (Rat) protein is Regulating synaptic membrane exocytosis protein 1 (Rims1).